We begin with the raw amino-acid sequence, 1013 residues long: Lysosomal alpha-mannosidase (1013 aa).

The first 49 residues, 1 to 49, serve as a signal peptide directing secretion; it reads MGTGPLTSGVRAGGGNTGWLWMSSCNLGSPVLPISFLFWLLLAAPGARA. Cystine bridges form between Cys55/Cys358 and Cys268/Cys273. Positions 72, 74, and 196 each coordinate Zn(2+). Asp196 functions as the Nucleophile in the catalytic mechanism. Asn310, Asn345, and Asn367 each carry an N-linked (GlcNAc...) asparagine glycan. Cys412 and Cys472 are joined by a disulfide. His446 is a Zn(2+) binding site. 8 N-linked (GlcNAc...) asparagine glycosylation sites follow: Asn489, Asn497, Asn544, Asn633, Asn646, Asn693, Asn767, and Asn931. Cysteines 493 and 501 form a disulfide.

The protein belongs to the glycosyl hydrolase 38 family. It depends on Zn(2+) as a cofactor.

It localises to the lysosome. The enzyme catalyses Hydrolysis of terminal, non-reducing alpha-D-mannose residues in alpha-D-mannosides.. Necessary for the catabolism of N-linked carbohydrates released during glycoprotein turnover. The polypeptide is Lysosomal alpha-mannosidase (Man2b1) (Mus musculus (Mouse)).